The following is a 1360-amino-acid chain: Transmembrane protein 94 (1360 aa).

Over methionine 1–cysteine 64 the chain is Cytoplasmic. The helical transmembrane segment at phenylalanine 65 to glycine 85 threads the bilayer. The Lumenal segment spans residues glycine 86–glutamine 92. A helical transmembrane segment spans residues glycine 93 to isoleucine 113. The Cytoplasmic segment spans residues glycine 114–arginine 273. Residues serine 221 and serine 225 each carry the phosphoserine modification. The chain crosses the membrane as a helical span at residues phenylalanine 274–isoleucine 294. The Lumenal portion of the chain corresponds to threonine 295–asparagine 320. The chain crosses the membrane as a helical span at residues glycine 321–glycine 341. At glutamate 342 to cysteine 1096 the chain is on the cytoplasmic side. The DKQGIL motif lies at aspartate 417–leucine 422. 3 positions are modified to phosphoserine: serine 444, serine 445, and serine 454. The disordered stretch occupies residues glutamate 487–proline 545. A compositionally biased stretch (basic residues) spans histidine 506 to histidine 515. Phosphoserine occurs at positions 517, 522, 802, and 945. A helical membrane pass occupies residues phenylalanine 1097 to valine 1117. The Lumenal segment spans residues glutamine 1118–serine 1124. A helical membrane pass occupies residues threonine 1125–glycine 1145. Over lysine 1146 to tyrosine 1171 the chain is Cytoplasmic. A helical membrane pass occupies residues phenylalanine 1172–glycine 1192. The Lumenal portion of the chain corresponds to phenylalanine 1193–glycine 1232. 2 N-linked (GlcNAc...) asparagine glycosylation sites follow: asparagine 1206 and asparagine 1209. A helical transmembrane segment spans residues leucine 1233–isoleucine 1253. Topologically, residues threonine 1254–threonine 1269 are cytoplasmic. The chain crosses the membrane as a helical span at residues asparagine 1270–valine 1290. At aspartate 1291–proline 1310 the chain is on the lumenal side. A helical transmembrane segment spans residues leucine 1311–valine 1331. Topologically, residues lysine 1332–phenylalanine 1360 are cytoplasmic. The GMN; metal-binding motif signature appears at glycine 1355–asparagine 1357.

Forms homooligomers.

The protein localises to the endoplasmic reticulum membrane. In terms of biological role, could function in the uptake of Mg(2+) from the cytosol into the endoplasmic reticulum and regulate intracellular Mg(2+) homeostasis. This is Transmembrane protein 94 from Mus musculus (Mouse).